The sequence spans 263 residues: tRNA pseudouridine synthase A (263 aa).

The active-site Nucleophile is Asp-53. Tyr-111 provides a ligand contact to substrate. A disordered region spans residues 232–263; that stretch reads TAPGHGLISGRSNMTNGKLENNKTTNPCVTKY. Over residues 241–263 the composition is skewed to polar residues; that stretch reads GRSNMTNGKLENNKTTNPCVTKY.

It belongs to the tRNA pseudouridine synthase TruA family. Homodimer.

The enzyme catalyses uridine(38/39/40) in tRNA = pseudouridine(38/39/40) in tRNA. In terms of biological role, formation of pseudouridine at positions 38, 39 and 40 in the anticodon stem and loop of transfer RNAs. The protein is tRNA pseudouridine synthase A of Halalkalibacterium halodurans (strain ATCC BAA-125 / DSM 18197 / FERM 7344 / JCM 9153 / C-125) (Bacillus halodurans).